Reading from the N-terminus, the 188-residue chain is Ribosomal RNA small subunit methyltransferase G (188 aa).

S-adenosyl-L-methionine is bound by residues Gly-69, Phe-74, 119–120 (VQ), and Arg-134.

It belongs to the methyltransferase superfamily. RNA methyltransferase RsmG family.

Its subcellular location is the cytoplasm. The catalysed reaction is guanosine(527) in 16S rRNA + S-adenosyl-L-methionine = N(7)-methylguanosine(527) in 16S rRNA + S-adenosyl-L-homocysteine. Functionally, specifically methylates the N7 position of guanine in position 527 of 16S rRNA. This chain is Ribosomal RNA small subunit methyltransferase G, found in Campylobacter jejuni (strain RM1221).